The following is a 568-amino-acid chain: Poly(A) polymerase (568 aa).

ATP-binding positions include 87–89, 99–102, 100–102, Asp154, Lys215, Tyr224, and 233–234; these read YGS, SDID, DID, and GV. Residues Asp100, Asp102, and Asp154 each coordinate Mg(2+). Ser452 and Ser550 each carry phosphoserine. Positions 525-568 are disordered; that stretch reads NEKRPSKKSKRKNLDARHETVKRSKSDAASGDNINGTTAAVDVN. The span at 536-550 shows a compositional bias: basic and acidic residues; that stretch reads KNLDARHETVKRSKS.

The protein belongs to the poly(A) polymerase family. As to quaternary structure, component of the cleavage and polyadenylation factor (CPF) complex, which is composed of PTI1, SYC1, SSU72, GLC7, MPE1, REF2, PFS2, PTA1, YSH1/BRR5, SWD2, CFT2/YDH1, YTH1, CFT1/YHH1, FIP1 and PAP1. Interacts with FIR1 and RRP6. The cofactor is Mg(2+). Mn(2+) serves as cofactor.

The protein resides in the nucleus. It carries out the reaction RNA(n) + ATP = RNA(n)-3'-adenine ribonucleotide + diphosphate. Its function is as follows. Polymerase component of the cleavage and polyadenylation factor (CPF) complex, which plays a key role in polyadenylation-dependent pre-mRNA 3'-end formation and cooperates with cleavage factors including the CFIA complex and NAB4/CFIB. The polypeptide is Poly(A) polymerase (PAP1) (Saccharomyces cerevisiae (strain ATCC 204508 / S288c) (Baker's yeast)).